The following is a 531-amino-acid chain: MTKYIFVTGGVVSSLGKGITAASLGRLLKNRGLNVTIQKFDPYINVDPGTMSPYQHGEVFVTDDGAETDLDLGHYERFIDINLNKYSNVTTGKIYSAVIRKERRGDYLGGTVQVIPHITNEIKERVFRAGRETNADVVITEIGGTVGDIESLPFLEAIRQIKSDVGRENVMYIHCTLVPYIKAAGEMKTKPTQHSVKELRSLGIQPNVIVVRTEMPMPQEMKEKIALFCDIDPKAVIEARDADTLYAVPLMLQEQKLDQIVCEHLRLNCREADMTEWKALVEKVRNLSKTTKIALVGKYVELPDAYISVVEALRHAGYAFDTDIDIQWINAEHVTRDNVADLLKDADGILVPGGFGDRGVEGKIEAIRYAREQRVPFLGICLGMQLASIEFARHVVGLSGAHSSEFDPNTPHPIIDLLPEQKDVEDLGGTLRLGLYPCKLQEGTLAYAAYGDEVIYERHRHRYEFNNQYRPIMEEHGFVFSGTSPDGRLVEVIELKDHPWFVAAQFHPEFTSRPTRPQPLFREFVRASLKE.

The interval 1-267 (MTKYIFVTGG…DQIVCEHLRL (267 aa)) is amidoligase domain. Ser-13 contacts CTP. Ser-13 lines the UTP pocket. An ATP-binding site is contributed by 14 to 19 (SLGKGI). L-glutamine is bound at residue Tyr-54. Position 71 (Asp-71) interacts with ATP. Mg(2+) is bound by residues Asp-71 and Glu-141. CTP is bound by residues 148-150 (DIE), 188-193 (KTKPTQ), and Lys-224. UTP is bound by residues 188 to 193 (KTKPTQ) and Lys-224. 240-242 (RDA) is a binding site for ATP. In terms of domain architecture, Glutamine amidotransferase type-1 spans 292-531 (KIALVGKYVE…REFVRASLKE (240 aa)). Residue Gly-354 participates in L-glutamine binding. Catalysis depends on Cys-381, which acts as the Nucleophile; for glutamine hydrolysis. Residues 382–385 (LGMQ), Glu-405, and Arg-462 each bind L-glutamine. Catalysis depends on residues His-507 and Glu-509.

It belongs to the CTP synthase family. As to quaternary structure, homotetramer.

The catalysed reaction is UTP + L-glutamine + ATP + H2O = CTP + L-glutamate + ADP + phosphate + 2 H(+). It catalyses the reaction L-glutamine + H2O = L-glutamate + NH4(+). It carries out the reaction UTP + NH4(+) + ATP = CTP + ADP + phosphate + 2 H(+). It functions in the pathway pyrimidine metabolism; CTP biosynthesis via de novo pathway; CTP from UDP: step 2/2. With respect to regulation, allosterically activated by GTP, when glutamine is the substrate; GTP has no effect on the reaction when ammonia is the substrate. The allosteric effector GTP functions by stabilizing the protein conformation that binds the tetrahedral intermediate(s) formed during glutamine hydrolysis. Inhibited by the product CTP, via allosteric rather than competitive inhibition. Functionally, catalyzes the ATP-dependent amination of UTP to CTP with either L-glutamine or ammonia as the source of nitrogen. Regulates intracellular CTP levels through interactions with the four ribonucleotide triphosphates. The polypeptide is CTP synthase (Geobacillus kaustophilus (strain HTA426)).